The sequence spans 265 residues: Probable cell division protein kinase ECU08_0230 (265 aa).

In terms of domain architecture, Protein kinase spans 4–263 (YILGALIGSG…IMEILENEYG (260 aa)). ATP-binding positions include 10-18 (IGSGTYGEV) and K33. D121 acts as the Proton acceptor in catalysis.

This sequence belongs to the protein kinase superfamily. CMGC Ser/Thr protein kinase family. CDC2/CDKX subfamily.

Its subcellular location is the nucleus. The catalysed reaction is L-seryl-[protein] + ATP = O-phospho-L-seryl-[protein] + ADP + H(+). It carries out the reaction L-threonyl-[protein] + ATP = O-phospho-L-threonyl-[protein] + ADP + H(+). Functionally, may play a role in the control of the eukaryotic cell cycle. This chain is Probable cell division protein kinase ECU08_0230, found in Encephalitozoon cuniculi (strain GB-M1) (Microsporidian parasite).